The sequence spans 144 residues: Cytochrome c oxidase subunit 4 isoform 1, mitochondrial (144 aa).

The Mitochondrial matrix segment spans residues 1–73; sequence SVVKSEDFSL…SFAEMNRGSN (73 aa). Lys4 carries the post-translational modification N6-acetyllysine; alternate. Position 4 is an N6-succinyllysine; alternate (Lys4). The residue at position 28 (Lys28) is an N6-acetyllysine. Ser31 and Ser33 each carry phosphoserine. Position 35 is an N6-acetyllysine; alternate (Lys35). An N6-succinyllysine; alternate modification is found at Lys35. Lys42 carries the N6-acetyllysine modification. The chain crosses the membrane as a helical span at residues 74 to 99; the sequence is EWKTVVGGAMFFIGFTALIIMWQKHY. Residues 100 to 144 lie on the Mitochondrial intermembrane side of the membrane; it reads VYGPLPQTFDKEWVGKQTKRMLDMKVNPIQGLASKWDYEKNEWKK.

The protein belongs to the cytochrome c oxidase IV family. Component of the cytochrome c oxidase (complex IV, CIV), a multisubunit enzyme composed of 14 subunits. The complex is composed of a catalytic core of 3 subunits MT-CO1, MT-CO2 and MT-CO3, encoded in the mitochondrial DNA, and 11 supernumerary subunits COX4I, COX5A, COX5B, COX6A, COX6B, COX6C, COX7A, COX7B, COX7C, COX8 and NDUFA4, which are encoded in the nuclear genome. The complex exists as a monomer or a dimer and forms supercomplexes (SCs) in the inner mitochondrial membrane with NADH-ubiquinone oxidoreductase (complex I, CI) and ubiquinol-cytochrome c oxidoreductase (cytochrome b-c1 complex, complex III, CIII), resulting in different assemblies (supercomplex SCI(1)III(2)IV(1) and megacomplex MCI(2)III(2)IV(2)). Interacts with PHB2; the interaction decreases in absence of SPHK2. Interacts with AFG1L. Interacts with ABCB7; this interaction allows the regulation of cellular iron homeostasis and cellular reactive oxygen species (ROS) levels in cardiomyocytes. Interacts with FLVCR2; this interaction occurs in the absence of heme and is disrupted upon heme binding. Interacts with IRGC.

The protein localises to the mitochondrion inner membrane. It participates in energy metabolism; oxidative phosphorylation. Its function is as follows. Component of the cytochrome c oxidase, the last enzyme in the mitochondrial electron transport chain which drives oxidative phosphorylation. The respiratory chain contains 3 multisubunit complexes succinate dehydrogenase (complex II, CII), ubiquinol-cytochrome c oxidoreductase (cytochrome b-c1 complex, complex III, CIII) and cytochrome c oxidase (complex IV, CIV), that cooperate to transfer electrons derived from NADH and succinate to molecular oxygen, creating an electrochemical gradient over the inner membrane that drives transmembrane transport and the ATP synthase. Cytochrome c oxidase is the component of the respiratory chain that catalyzes the reduction of oxygen to water. Electrons originating from reduced cytochrome c in the intermembrane space (IMS) are transferred via the dinuclear copper A center (CU(A)) of subunit 2 and heme A of subunit 1 to the active site in subunit 1, a binuclear center (BNC) formed by heme A3 and copper B (CU(B)). The BNC reduces molecular oxygen to 2 water molecules using 4 electrons from cytochrome c in the IMS and 4 protons from the mitochondrial matrix. The polypeptide is Cytochrome c oxidase subunit 4 isoform 1, mitochondrial (COX4I1) (Hylobates agilis (Agile gibbon)).